A 263-amino-acid chain; its full sequence is Insertion sequence IS21-like putative ATP-binding protein (263 aa).

ATP is bound at residue 114-121 (GPSGTGKT).

The protein belongs to the IS21/IS1162 putative ATP-binding protein family.

The protein is Insertion sequence IS21-like putative ATP-binding protein (tnpB) of Bacteroides fragilis.